The sequence spans 300 residues: 2-oxoglutarate-dependent dioxygenase DAO (300 aa).

The 104-residue stretch at 149 to 252 folds into the Fe2OG dioxygenase domain; sequence WPCQFRMNRY…VSIAMFLLAP (104 aa). Fe cation contacts are provided by His173, Asp175, and His232. Arg242 serves as a coordination point for 2-oxoglutarate.

It belongs to the iron/ascorbate-dependent oxidoreductase family. Requires Fe(2+) as cofactor.

In terms of biological role, 2-oxoglutarate-dependent dioxygenase essential for auxin catabolism and maintenance of auxin homeostasis in reproductive organs. Catalyzes the irreversible oxidation of indole-3-acetic acid (IAA) to the biologically inactive 2-oxoindole-3-acetic acid (OxIAA). The sequence is that of 2-oxoglutarate-dependent dioxygenase DAO (DAO) from Oryza sativa subsp. indica (Rice).